Here is a 410-residue protein sequence, read N- to C-terminus: Chitinase-3-like protein 1 (410 aa).

The first 48 residues, 1-48 (MGVKAAQTGIWASQGQSIRVVGFQAQTAHRAICLLGFVVLVLLQCCSA), serve as a signal peptide directing secretion. The 362-residue stretch at 49–410 (YKLVCYYTSW…NAIKDALAAT (362 aa)) folds into the GH18 domain. Residues cysteine 53 and cysteine 78 are joined by a disulfide bond. Residue asparagine 87 is glycosylated (N-linked (GlcNAc...) asparagine). Residues 97-98 (EW), 124-127 (GGWN), tyrosine 168, 231-234 (MTYD), and arginine 290 each bind chitin. Cysteine 327 and cysteine 391 are joined by a disulfide. The important for AKT1 activation and IL8 production stretch occupies residues 351–365 (QWVGYDDQESVKSKV). Tryptophan 379 contacts chitin.

Belongs to the glycosyl hydrolase 18 family. Monomer.

Its subcellular location is the secreted. It localises to the extracellular space. The protein localises to the cytoplasm. The protein resides in the perinuclear region. It is found in the endoplasmic reticulum. Functionally, carbohydrate-binding lectin with a preference for chitin. Has no chitinase activity. May play a role in tissue remodeling and in the capacity of cells to respond to and cope with changes in their environment. Plays a role in T-helper cell type 2 (Th2) inflammatory response and IL-13-induced inflammation, regulating allergen sensitization, inflammatory cell apoptosis, dendritic cell accumulation and M2 macrophage differentiation. Facilitates invasion of pathogenic enteric bacteria into colonic mucosa and lymphoid organs. Mediates activation of AKT1 signaling pathway and subsequent IL8 production in colonic epithelial cells. Regulates antibacterial responses in lung by contributing to macrophage bacterial killing, controlling bacterial dissemination and augmenting host tolerance. Also regulates hyperoxia-induced injury, inflammation and epithelial apoptosis in lung. In Pongo abelii (Sumatran orangutan), this protein is Chitinase-3-like protein 1 (CHI3L1).